The sequence spans 285 residues: Seed agglutinin 2 (285 aa).

The N-terminal stretch at 1 to 31 (MASYKFKTQNSFLLLLSISFFFLLLLNKVNS) is a signal peptide. N-linked (GlcNAc...) asparagine glycosylation is present at Asn-147. Mn(2+)-binding residues include Glu-156 and Asp-158. Positions 158, 162, and 166 each coordinate Ca(2+). Mn(2+)-binding residues include Asp-166 and His-171.

The protein belongs to the leguminous lectin family. As to quaternary structure, homotetramer. Post-translationally, mostly found in non-glycosylated form. In terms of tissue distribution, expressed in seed.

In terms of biological role, seed lectin. The protein is Seed agglutinin 2 of Robinia pseudoacacia (Black locust).